We begin with the raw amino-acid sequence, 406 residues long: WD repeat and SOCS box-containing protein 2 (406 aa).

The disordered stretch occupies residues 70–89; sequence AKSRSSKNETKGRGSPKEKT. WD repeat units lie at residues 107-150, 153-193, 197-236, 239-278, and 293-332; these read PPSK…LLLN, GHQD…KQIQ, GHLQ…LIRK, GHQS…RLRS, and VHIS…PIAF. Positions 358 to 406 constitute an SOCS box domain; the sequence is HVQFWTAPRVLSSLKHLCRKALRSFLTTYQVLALPIPKKMKEFLTYRTF.

The protein operates within protein modification; protein ubiquitination. Functionally, may be a substrate-recognition component of a SCF-like ECS (Elongin-Cullin-SOCS-box protein) E3 ubiquitin ligase complex which mediates the ubiquitination and subsequent proteasomal degradation of target proteins. This is WD repeat and SOCS box-containing protein 2 (WSB2) from Bos taurus (Bovine).